Reading from the N-terminus, the 459-residue chain is FAD-dependent monooxygenase nanF (459 aa).

Positions 49, 62, and 121 each coordinate FAD. Active-site residues include R200 and Y230. FAD-binding residues include D327 and G340.

It belongs to the paxM FAD-dependent monooxygenase family. Requires FAD as cofactor.

It participates in secondary metabolite biosynthesis. In terms of biological role, FAD-dependent monooxygenase; part of the gene cluster that mediates the biosynthesis of the benzazepine alkaloid nanangelenin A which contains an unprecedented 3,4-dihydro-1-benzazepine-2,5-dione-N-prenyl-N-acetoxy-anthranilamide scaffold. The first step of nanangelenin biosynthesis is catalyzed by the indoleamine 2,3-dioxygenase nanC which produces N-formyl-kynurenine through the catabolism of tryptophan. The two-module NRPS nanA then utilizes anthranilate (Ant) and L-kynurenine (L-Kyn) to assemble the dipeptide product nanangelenin B. The first adenylation domain of nanA (A1) loads anthranilate onto the T1 domain, while A2 loads kynurenine, generated through spontaneous nonenzymatic deformylation of the nanC-supplied N-formyl-kynurenine. The peptide bond formation between the tethered amino acids is catalyzed by the first condensation domain (C1) between anthranilate's carbonyl carbon and kynurenine's aliphatic primary amine. The second C domain (C2) catalyzes the final cyclization event between the aromatic amine of kynurenine and the tethered carbonyl carbon, yielding nanangelenin B. The terminal T3 domain enhances the catalytic efficiency of C2, suggesting the T2-tethered Ant-L-Kyn is transferred to T3 prior to cyclization by C2. Once released from nanA, nanangelenin B is then prenylated by the prenyltransferase nanD to form nanangelenin C. Nanangelenin C is then N-hydroxylated by the FAD-dependent monooxygenase nanF and further acetylated by the acetyltransferase nanB to yield nanangelenin F. Finally, the N-methyltransferase nanE methylates the amide nitrogen of 1-benzazepine to convert nanangelenin F into nanangelenin A. NanE is also able to methylate most of the intermediates of the pathway such as nanangelenin B and nanangelenin C to produce nanangelenin D and nanangelenin E, respectively. This Aspergillus nanangensis protein is FAD-dependent monooxygenase nanF.